Consider the following 47-residue polypeptide: GVPCLCDSDGPSVRGNTLSGILWLAGCPSGWHNCKAHGPTIGWCCKQ.

3 cysteine pairs are disulfide-bonded: cysteine 4–cysteine 44, cysteine 6–cysteine 34, and cysteine 27–cysteine 45.

The protein belongs to the sea anemone sodium channel inhibitory toxin family. Type I subfamily. As to expression, expressed in ectodermal glands. Not expressed in nematocytes.

It is found in the secreted. Functionally, binds specifically to voltage-gated sodium channels (Nav), thereby delaying their inactivation during signal transduction. It strongly stimulates mammalian cardiac muscle contraction. Paralyzes the shore crab (C.maenas) by tetanic contractions after intramuscular injection. In Anthopleura elegantissima (Green aggregating anemone), this protein is Delta-actitoxin-Ael1a.